Consider the following 146-residue polypeptide: MSFWKEKSLAQLDTQEWESLCDGCGKCCLNKLIDDETEELYYTNAACKLLDHQDGHCVHYQERFTFVPSCTQVTVDNVAQLTWLPDSCAYRRLYLGRELPSWHPLITGSKAAMHEAGMSTQNKVKCETKVRYIEDHIVLWPMRDLD.

Belongs to the UPF0260 family.

This chain is UPF0260 protein Swoo_2117, found in Shewanella woodyi (strain ATCC 51908 / MS32).